The primary structure comprises 391 residues: Trehalose-phosphate phosphatase (391 aa).

Asp-147 serves as the catalytic Nucleophile. Mg(2+) contacts are provided by Asp-147, Asp-149, and Asp-330. Asp-147–Asp-149 lines the substrate pocket.

Belongs to the trehalose phosphatase family. Requires Mg(2+) as cofactor.

It carries out the reaction alpha,alpha-trehalose 6-phosphate + H2O = alpha,alpha-trehalose + phosphate. Its pathway is glycan biosynthesis; trehalose biosynthesis. Functionally, removes the phosphate from trehalose 6-phosphate to produce free trehalose. The sequence is that of Trehalose-phosphate phosphatase (otsB) from Mycobacterium avium (strain 104).